The following is a 272-amino-acid chain: Shikimate dehydrogenase (NADP(+)) (272 aa).

Shikimate is bound by residues 14 to 16 and Thr-61; that span reads SLS. Lys-65 functions as the Proton acceptor in the catalytic mechanism. Shikimate is bound at residue Asp-102. NADP(+)-binding positions include 127–131, 151–156, and Leu-215; these read GAGGA and NRTPSK. Tyr-217 lines the shikimate pocket. Gly-239 contacts NADP(+).

This sequence belongs to the shikimate dehydrogenase family. Homodimer.

The enzyme catalyses shikimate + NADP(+) = 3-dehydroshikimate + NADPH + H(+). Its pathway is metabolic intermediate biosynthesis; chorismate biosynthesis; chorismate from D-erythrose 4-phosphate and phosphoenolpyruvate: step 4/7. Functionally, involved in the biosynthesis of the chorismate, which leads to the biosynthesis of aromatic amino acids. Catalyzes the reversible NADPH linked reduction of 3-dehydroshikimate (DHSA) to yield shikimate (SA). The chain is Shikimate dehydrogenase (NADP(+)) from Coxiella burnetii (strain CbuG_Q212) (Coxiella burnetii (strain Q212)).